The sequence spans 275 residues: Hydroxyethylthiazole kinase (275 aa).

Met-50 provides a ligand contact to substrate. The ATP site is built by Arg-126 and Ser-171. Position 200 (Ala-200) interacts with substrate.

This sequence belongs to the Thz kinase family. The cofactor is Mg(2+).

It carries out the reaction 5-(2-hydroxyethyl)-4-methylthiazole + ATP = 4-methyl-5-(2-phosphooxyethyl)-thiazole + ADP + H(+). Its pathway is cofactor biosynthesis; thiamine diphosphate biosynthesis; 4-methyl-5-(2-phosphoethyl)-thiazole from 5-(2-hydroxyethyl)-4-methylthiazole: step 1/1. In terms of biological role, catalyzes the phosphorylation of the hydroxyl group of 4-methyl-5-beta-hydroxyethylthiazole (THZ). The polypeptide is Hydroxyethylthiazole kinase (Acinetobacter baumannii (strain AB307-0294)).